A 558-amino-acid polypeptide reads, in one-letter code: Two-component response regulator-like APRR5 (558 aa).

The Response regulatory domain maps to 51–169; that stretch reads RVLLVEADDS…ELRNLWQHVW (119 aa). The interval 180 to 233 is disordered; sequence FPWNESVGQQKAEGASANNSNGKRDDHVVSGNGGDAQSSCTRPEMEGESADVEV. A coiled-coil region spans residues 240–260; that stretch reads QMECAKSQFNETRLLANELQS. Disordered regions lie at residues 297–319 and 535–558; these read SLRR…HPSS and KKLA…TQAP. Residues 303 to 319 are compositionally biased toward polar residues; sequence ASENQSSGDRPSLHPSS. The region spanning 509–551 is the CCT domain; it reads REAALTKFRMKRKDRCYEKKVRYESRKKLAEQRPRIKGQFVRQ.

It belongs to the ARR-like family. Interacts with ADO1 and ADO2. Interacts with SPY (via N-terminus). Post-translationally, phosphorylation varies throughout the diurnal cycle and enhances ADO1 binding. O-fucosylated by SPY. O-fucosylation promotes APRR5 proteolysis.

The protein localises to the nucleus. Its function is as follows. Transcriptional repressor of CCA1 and LHY, thereby controlling photoperiodic flowering response. Involved in the positive and negative feedback loops of the circadian clock. With RVE8, forms a negative feedback loop of the circadian clock. Expression of several members of the ARR-like family is controlled by circadian rhythm. Proteolytic substrate of the E3 ubiquitin ligase SCF(ADO1) complex. APRR9, APRR7, and APRR5 coordinately act on the upstream region of the target genes to repress their expression from noon until midnight. The particular coordinated sequential expression of APRR9, APRR7, APRR5, APRR3 and APPR1 result to circadian waves that may be at the basis of the endogenous circadian clock. Negative regulator of shade avoidance response. Involved in the inhibition of leaf expansion in shade avoidance response. In Arabidopsis thaliana (Mouse-ear cress), this protein is Two-component response regulator-like APRR5 (APRR5).